Consider the following 481-residue polypeptide: Glutamate--cysteine ligase (481 aa).

It belongs to the glutamate--cysteine ligase type 1 family. Type 1 subfamily.

The enzyme catalyses L-cysteine + L-glutamate + ATP = gamma-L-glutamyl-L-cysteine + ADP + phosphate + H(+). Its pathway is sulfur metabolism; glutathione biosynthesis; glutathione from L-cysteine and L-glutamate: step 1/2. The polypeptide is Glutamate--cysteine ligase (Clostridium acetobutylicum (strain ATCC 824 / DSM 792 / JCM 1419 / IAM 19013 / LMG 5710 / NBRC 13948 / NRRL B-527 / VKM B-1787 / 2291 / W)).